Reading from the N-terminus, the 244-residue chain is LexA repressor (244 aa).

The tract at residues 1–24 (MSDSSDTTVDGASDGASDGASGAD) is disordered. Low complexity predominate over residues 10–24 (DGASDGASDGASGAD). A DNA-binding region (H-T-H motif) is located at residues 58 to 78 (IREIGDAVGLTSTSSVAHQLR). Catalysis depends on for autocatalytic cleavage activity residues Ser168 and Lys205.

This sequence belongs to the peptidase S24 family. Homodimer.

It carries out the reaction Hydrolysis of Ala-|-Gly bond in repressor LexA.. Represses a number of genes involved in the response to DNA damage (SOS response), including recA and lexA. In the presence of single-stranded DNA, RecA interacts with LexA causing an autocatalytic cleavage which disrupts the DNA-binding part of LexA, leading to derepression of the SOS regulon and eventually DNA repair. The chain is LexA repressor from Mycobacterium ulcerans (strain Agy99).